The sequence spans 961 residues: Glycine dehydrogenase (decarboxylating) (961 aa).

K709 is modified (N6-(pyridoxal phosphate)lysine).

Belongs to the GcvP family. As to quaternary structure, the glycine cleavage system is composed of four proteins: P, T, L and H. It depends on pyridoxal 5'-phosphate as a cofactor.

It carries out the reaction N(6)-[(R)-lipoyl]-L-lysyl-[glycine-cleavage complex H protein] + glycine + H(+) = N(6)-[(R)-S(8)-aminomethyldihydrolipoyl]-L-lysyl-[glycine-cleavage complex H protein] + CO2. Functionally, the glycine cleavage system catalyzes the degradation of glycine. The P protein binds the alpha-amino group of glycine through its pyridoxal phosphate cofactor; CO(2) is released and the remaining methylamine moiety is then transferred to the lipoamide cofactor of the H protein. The polypeptide is Glycine dehydrogenase (decarboxylating) (Teredinibacter turnerae (strain ATCC 39867 / T7901)).